Consider the following 462-residue polypeptide: Argininosuccinate lyase (462 aa).

The protein belongs to the lyase 1 family. Argininosuccinate lyase subfamily.

Its subcellular location is the cytoplasm. It carries out the reaction 2-(N(omega)-L-arginino)succinate = fumarate + L-arginine. The protein operates within amino-acid biosynthesis; L-arginine biosynthesis; L-arginine from L-ornithine and carbamoyl phosphate: step 3/3. The polypeptide is Argininosuccinate lyase (Bacillus cereus (strain ZK / E33L)).